A 273-amino-acid chain; its full sequence is F-actin-capping protein subunit alpha (273 aa).

Belongs to the F-actin-capping protein alpha subunit family. In terms of assembly, component of the F-actin capping complex, composed of a heterodimer of an alpha and a beta subunit.

The protein resides in the cytoplasm. Its subcellular location is the cytoskeleton. It is found in the actin patch. Its function is as follows. F-actin-capping proteins bind in a Ca(2+)-independent manner to the fast growing ends of actin filaments (barbed end) thereby blocking the exchange of subunits at these ends. Unlike other capping proteins (such as gelsolin and severin), these proteins do not sever actin filaments. The protein is F-actin-capping protein subunit alpha (cap1) of Aspergillus oryzae (strain ATCC 42149 / RIB 40) (Yellow koji mold).